Here is a 310-residue protein sequence, read N- to C-terminus: Homoserine kinase (310 aa).

P91 to C101 contributes to the ATP binding site.

It belongs to the GHMP kinase family. Homoserine kinase subfamily.

It localises to the cytoplasm. The catalysed reaction is L-homoserine + ATP = O-phospho-L-homoserine + ADP + H(+). Its pathway is amino-acid biosynthesis; L-threonine biosynthesis; L-threonine from L-aspartate: step 4/5. Catalyzes the ATP-dependent phosphorylation of L-homoserine to L-homoserine phosphate. This is Homoserine kinase from Escherichia coli O6:H1 (strain CFT073 / ATCC 700928 / UPEC).